The primary structure comprises 276 residues: Glutamate racemase (276 aa).

Residues 10–11 (DS) and 42–43 (YG) each bind substrate. C73 serves as the catalytic Proton donor/acceptor. 74 to 75 (NS) serves as a coordination point for substrate. Catalysis depends on C183, which acts as the Proton donor/acceptor. Position 184 to 185 (184 to 185 (TH)) interacts with substrate.

This sequence belongs to the aspartate/glutamate racemases family.

It catalyses the reaction L-glutamate = D-glutamate. The protein operates within cell wall biogenesis; peptidoglycan biosynthesis. Provides the (R)-glutamate required for cell wall biosynthesis. The chain is Glutamate racemase from Parafrankia sp. (strain EAN1pec).